The primary structure comprises 1791 residues: Protein TIC 214 (1791 aa).

Helical transmembrane passes span 19 to 39 (IINS…FSIG), 68 to 88 (FIAG…HLAL), 91 to 111 (PHTI…WNNH), 133 to 153 (VFLN…SSML), 176 to 196 (VGWL…LVWI), and 230 to 250 (IFSI…PSPI). Basic and acidic residues predominate over residues 257–271 (GTSETEERGGTKQDQ). Disordered stretches follow at residues 257 to 278 (GTSE…TEEA) and 1498 to 1521 (ADQG…PNQE).

The protein belongs to the TIC214 family. Part of the Tic complex.

Its subcellular location is the plastid. It is found in the chloroplast inner membrane. Involved in protein precursor import into chloroplasts. May be part of an intermediate translocation complex acting as a protein-conducting channel at the inner envelope. This Aethionema grandiflorum (Persian stone-cress) protein is Protein TIC 214.